The following is a 492-amino-acid chain: La-related protein 6 (492 aa).

Positions 1–87 (MAQLGEQTLP…REDLEPEWRP (87 aa)) are disordered. Ala-2 is modified (N-acetylalanine). Residues 24-37 (EAEDLEDLEEEDEG) are compositionally biased toward acidic residues. A phosphoserine mark is found at Ser-56 and Ser-58. Positions 65–74 (GHSSATTSGG) are enriched in polar residues. Residues 86 to 177 (RPPDEELIRK…RRTTPVPLFP (92 aa)) enclose the HTH La-type RNA-binding domain. Residues 184–296 (KMLLVYDLHL…KAVLIGMKPP (113 aa)) form the RRM domain. The short motif at 186 to 193 (LLVYDLHL) is the Nuclear export signal element. Disordered regions lie at residues 292-398 (GMKP…KSPL) and 466-492 (VGVLRLPRGPDNTRGFHGGHERGRACV). The Nuclear localization signal motif lies at 296-302 (PKKKPLK). The span at 332–346 (DESSANSSSDPESNP) shows a compositional bias: low complexity. Residues 359–386 (NKLSPSGHQNIFLSPNASPCSSPWSSPL) show a composition bias toward polar residues. Residues 427–485 (PSGSPWVRRRRQAEMGTQEKSPGASPLLSRRMQTADGLPVGVLRLPRGPDNTRGFHGGH) enclose the SUZ-C domain. Basic and acidic residues predominate over residues 483 to 492 (GGHERGRACV).

As to quaternary structure, interacts (via the HTH domain) with VIM/vimentin. Interacts (via C-terminus) with non-muscle myosin MYH10. Interacts (via C-terminus) with DHX9. As to expression, expressed in numerous tissues. Highest expression in heart and brain, intermediate in kidney, skeletal muscle and testis, lowest expression in testis (at protein level).

Its subcellular location is the cytoplasm. It localises to the nucleus. In terms of biological role, regulates the coordinated translation of type I collagen alpha-1 and alpha-2 mRNAs, CO1A1 and CO1A2. Stabilizes mRNAs through high-affinity binding of a stem-loop structure in their 5' UTR. This regulation requires VIM and MYH10 filaments, and the helicase DHX9. The chain is La-related protein 6 (Larp6) from Mus musculus (Mouse).